The following is a 66-amino-acid chain: Dermaseptin PD-3-7 (66 aa).

An N-terminal signal peptide occupies residues 1-22 (MSFMKKSLLLVLFLGVVSLSNC). Positions 23–40 (EEEKGENENEDHEEHHEE) are excised as a propeptide.

Expressed by the skin glands.

It is found in the secreted. Its function is as follows. Possesses a potent antimicrobial activity against Gram-positive and Gram-negative bacteria. Probably acts by disturbing membrane functions with its amphipathic structure. This is Dermaseptin PD-3-7 from Agalychnis dacnicolor (Giant Mexican leaf frog).